The primary structure comprises 131 residues: Protein ApaG (131 aa).

An ApaG domain is found at 7-131 (PVKPYDLTVS…FLLAMPRTLH (125 aa)).

In Bordetella bronchiseptica (strain ATCC BAA-588 / NCTC 13252 / RB50) (Alcaligenes bronchisepticus), this protein is Protein ApaG.